A 249-amino-acid chain; its full sequence is MIISILTLFPEMFAGPFGSSIIKRARERGLVDIELFDIRDFSPNRHRTVDDTPYGGGGGMVMRPEPIRRALDHLLERGRGGGTVVLLCPQGRRFDQDSARALAAAGKLVLICGHYEGVDERVREDVDLEISVGDFVVTGGEIPAMLVVDAVCRLVPGVLGEPGGAEDDSFAGGLLEYPQYTRPRDYLGRDVPEVLLSGHHGEIERWRRQEALLRTLVRRPDLIDAARMEAGDRELLAQLARRLKELGLV.

S-adenosyl-L-methionine is bound by residues G113 and 132–137 (VGDFVV).

Belongs to the RNA methyltransferase TrmD family. In terms of assembly, homodimer.

The protein resides in the cytoplasm. It carries out the reaction guanosine(37) in tRNA + S-adenosyl-L-methionine = N(1)-methylguanosine(37) in tRNA + S-adenosyl-L-homocysteine + H(+). Specifically methylates guanosine-37 in various tRNAs. The chain is tRNA (guanine-N(1)-)-methyltransferase from Desulforudis audaxviator (strain MP104C).